The chain runs to 310 residues: Olfactory receptor 8B8 (310 aa).

Over 1 to 27 (MATENASVPEFILAGLTDQPGLRMPLF) the chain is Extracellular. Asparagine 5 carries N-linked (GlcNAc...) asparagine glycosylation. The chain crosses the membrane as a helical span at residues 28–48 (FLFLGFYMVTMVGNLGLITLI). The Cytoplasmic segment spans residues 49–55 (GLNSHLH). A helical membrane pass occupies residues 56 to 76 (TPMYFFLFNLSLIDFCYSTVI). Residues 77-98 (TPKMLVSFVSKKNIISYSGCMT) lie on the Extracellular side of the membrane. A disulfide bond links cysteine 96 and cysteine 188. Residues 99 to 119 (QLFFFLFFVVSESFILSAMAY) traverse the membrane as a helical segment. The Cytoplasmic segment spans residues 120–140 (DRYVAICNPLMYTVTMSPQVC). A helical membrane pass occupies residues 141 to 161 (LLLLLGVYVMGFAGAMAHTAF). At 162 to 195 (MVKLTFCADKLVNHYMCDILPLLERSCTSTYVNE) the chain is on the extracellular side. Residues 196–216 (LVVFIVVGIDIGVPTVTIFIS) form a helical membrane-spanning segment. The Cytoplasmic segment spans residues 217 to 238 (YALILSSILRISSTEGRSKAFS). A helical membrane pass occupies residues 239–259 (TCSSHIIAVSLFFGSGAFMYL). The Extracellular portion of the chain corresponds to 260-270 (KPSSLLPMNQG). A helical membrane pass occupies residues 271–291 (KVSSLFYTIVVPMLNPLIYSL). The Cytoplasmic segment spans residues 292-310 (RNKDVKVALRKTLSRSSFS).

It belongs to the G-protein coupled receptor 1 family.

The protein resides in the cell membrane. Odorant receptor. The polypeptide is Olfactory receptor 8B8 (Mus musculus (Mouse)).